The chain runs to 410 residues: MPHSTNREMILGIVVGTAGISLLLLWYHKVRKPRTAMSLPKFLSLGNSLDLMTLQDEMPSGQGTTAIFQGRQLQILEKLNELLTHMEELKEEIRVLKEAIPKLEEYIQGELGGKVTVHKISPQHRARKRRLATVQSSATSNSSEEAESEGGYVTANTDTEEQSFPVPKEFNTHVEELNLDALIQRADNLRVNESRKVESFELLCDHKEKFRDEIEFIWRFARAYGDMYELSTNIQEKKHYANIGKTLGEKAIMRAPKNGYCHLWYAVLCGYVSEFEGLQNKINYGYRFKEHLDKAIEFLPEEPFLYYLKGRYCYAVSKLSWIERKMAATLFGNIPSSTVQEALQNFLKVEELQPGFSKSNYMFMAKCYADLNQIDSAMKFCNLAVLLPCITKEDKDAQKEVKKISTSLKR.

Residues 10 to 27 (ILGIVVGTAGISLLLLWY) traverse the membrane as a helical segment. The stretch at 71–109 (RQLQILEKLNELLTHMEELKEEIRVLKEAIPKLEEYIQG) forms a coiled coil. Serine 121 bears the Phosphoserine mark. Residues 122-131 (PQHRARKRRL) are compositionally biased toward basic residues. The tract at residues 122 to 153 (PQHRARKRRLATVQSSATSNSSEEAESEGGYV) is disordered. Threonine 139 is modified (phosphothreonine). Tyrosine 152 is modified (phosphotyrosine). A phosphothreonine mark is found at threonine 154 and threonine 157.

The protein belongs to the RMDN family. As to quaternary structure, interacts with microtubules.

The protein resides in the membrane. The protein localises to the cytoplasm. It localises to the cytoskeleton. It is found in the spindle. Its subcellular location is the spindle pole. This Bos taurus (Bovine) protein is Regulator of microtubule dynamics protein 2 (RMDN2).